The primary structure comprises 337 residues: Ketol-acid reductoisomerase (NADP(+)) (337 aa).

The region spanning 3–183 (IELFYDADAD…GGGRAGIIPT (181 aa)) is the KARI N-terminal Rossmann domain. NADP(+) contacts are provided by residues 26–29 (YGSQ), R49, S52, S54, and 84–87 (DTSQ). H109 is a catalytic residue. Residue G135 participates in NADP(+) binding. Residues 184–329 (TFEAETVTDL…AKLRDLMSWV (146 aa)) form the KARI C-terminal knotted domain. D192, E196, E228, and E232 together coordinate Mg(2+). Substrate is bound at residue S253.

Belongs to the ketol-acid reductoisomerase family. Mg(2+) serves as cofactor.

It carries out the reaction (2R)-2,3-dihydroxy-3-methylbutanoate + NADP(+) = (2S)-2-acetolactate + NADPH + H(+). It catalyses the reaction (2R,3R)-2,3-dihydroxy-3-methylpentanoate + NADP(+) = (S)-2-ethyl-2-hydroxy-3-oxobutanoate + NADPH + H(+). It participates in amino-acid biosynthesis; L-isoleucine biosynthesis; L-isoleucine from 2-oxobutanoate: step 2/4. It functions in the pathway amino-acid biosynthesis; L-valine biosynthesis; L-valine from pyruvate: step 2/4. Its function is as follows. Involved in the biosynthesis of branched-chain amino acids (BCAA). Catalyzes an alkyl-migration followed by a ketol-acid reduction of (S)-2-acetolactate (S2AL) to yield (R)-2,3-dihydroxy-isovalerate. In the isomerase reaction, S2AL is rearranged via a Mg-dependent methyl migration to produce 3-hydroxy-3-methyl-2-ketobutyrate (HMKB). In the reductase reaction, this 2-ketoacid undergoes a metal-dependent reduction by NADPH to yield (R)-2,3-dihydroxy-isovalerate. The polypeptide is Ketol-acid reductoisomerase (NADP(+)) (Corynebacterium efficiens (strain DSM 44549 / YS-314 / AJ 12310 / JCM 11189 / NBRC 100395)).